The chain runs to 490 residues: Protein nucleotidyltransferase YdiU (490 aa).

Positions 94, 96, 97, 117, 129, 130, 180, and 187 each coordinate ATP. Catalysis depends on aspartate 256, which acts as the Proton acceptor. Residues asparagine 257 and aspartate 266 each contribute to the Mg(2+) site. Position 266 (aspartate 266) interacts with ATP.

The protein belongs to the SELO family. Mg(2+) serves as cofactor. Requires Mn(2+) as cofactor.

It catalyses the reaction L-seryl-[protein] + ATP = 3-O-(5'-adenylyl)-L-seryl-[protein] + diphosphate. The catalysed reaction is L-threonyl-[protein] + ATP = 3-O-(5'-adenylyl)-L-threonyl-[protein] + diphosphate. The enzyme catalyses L-tyrosyl-[protein] + ATP = O-(5'-adenylyl)-L-tyrosyl-[protein] + diphosphate. It carries out the reaction L-histidyl-[protein] + UTP = N(tele)-(5'-uridylyl)-L-histidyl-[protein] + diphosphate. It catalyses the reaction L-seryl-[protein] + UTP = O-(5'-uridylyl)-L-seryl-[protein] + diphosphate. The catalysed reaction is L-tyrosyl-[protein] + UTP = O-(5'-uridylyl)-L-tyrosyl-[protein] + diphosphate. In terms of biological role, nucleotidyltransferase involved in the post-translational modification of proteins. It can catalyze the addition of adenosine monophosphate (AMP) or uridine monophosphate (UMP) to a protein, resulting in modifications known as AMPylation and UMPylation. The sequence is that of Protein nucleotidyltransferase YdiU from Clostridium beijerinckii (strain ATCC 51743 / NCIMB 8052) (Clostridium acetobutylicum).